Here is a 64-residue protein sequence, read N- to C-terminus: Small ribosomal subunit protein eS17 (64 aa).

The protein belongs to the eukaryotic ribosomal protein eS17 family.

This chain is Small ribosomal subunit protein eS17, found in Natronomonas pharaonis (strain ATCC 35678 / DSM 2160 / CIP 103997 / JCM 8858 / NBRC 14720 / NCIMB 2260 / Gabara) (Halobacterium pharaonis).